The chain runs to 837 residues: Toll-like receptor 4 (837 aa).

The signal sequence occupies residues 1 to 23 (MMSASRLAGTLIPAMAFLSCVRP). The Extracellular segment spans residues 24–629 (ESWEPCVVPN…SLNITCQMNK (606 aa)). Cys29 and Cys38 are joined by a disulfide. N-linked (GlcNAc...) asparagine glycosylation occurs at Asn33. LRR repeat units follow at residues 53 to 74 (STKNLDLSFNPLRHLGSYSFFS), 77 to 98 (ELQVLDLSRCEIQTIEDGAYQS), 101 to 122 (HLSTLILTGNPIQSLALGAFSG), 125 to 146 (SLQKLVAVETNLASLENFPIGH), and 149 to 170 (TLKELNVAHNLIQSFKLPEYFS). N-linked (GlcNAc...) asparagine glycosylation occurs at Asn171. 3 LRR repeats span residues 174-197 (NLEYLDLSSNKIQSIYCTDLRVLH), 203-223 (NLSLDLSLNPMTFIQPGAFKE), and 225-245 (RLHKLTLRNNFDSLNVMKTCI). Asn203 is a glycosylation site (N-linked (GlcNAc...) asparagine). A disulfide bond links Cys279 and Cys304. Asn280 and Asn307 each carry an N-linked (GlcNAc...) asparagine glycan. LRR repeat units lie at residues 329-349 (GWQHLELVNCKFGQFPTLKLK), 350-371 (SLKRLTFTSNKGGNAFSEVDLP), 372-392 (SLEFLDLSRNGLSFKGCCSQS), 398-420 (SLKYLDLSFNGVITMSSNFLGLE), 421-442 (QLEHLDFQHSNLKQMSEFSVFL), 446-454 (NLIYLDISH), 470-493 (SLEVLKMAGNSFQENFLPDIFTEL), 495-516 (NLTFLDLSQCQLEQLSPTAFNS), 519-540 (SLQVLNMSHNNFFSLDTFPYKC), and 543-563 (SLRVLDYSLNHIMTSKKQELQ). Cys388 and Cys389 are disulfide-bonded. Asn495 and Asn524 each carry an N-linked (GlcNAc...) asparagine glycan. N-linked (GlcNAc...) asparagine glycosylation occurs at Asn573. Positions 577–627 (NDFACTCEHQSFLQWIKDQRQLLVEVERMECATPSDKQGMPVLSLNITCQM) constitute an LRRCT domain. Intrachain disulfides connect Cys581-Cys607 and Cys583-Cys625. 2 N-linked (GlcNAc...) asparagine glycosylation sites follow: Asn622 and Asn628. Residues 630–650 (TIIGVSVLSVLVVSVVAVLVY) form a helical membrane-spanning segment. The Cytoplasmic segment spans residues 651–837 (KFYFHLMLLA…GCNWQEATSI (187 aa)). Residues 670 to 813 (NVYDAFVIYS…IFWRRLRKAL (144 aa)) enclose the TIR domain.

Belongs to the Toll-like receptor family. As to quaternary structure, belongs to the lipopolysaccharide (LPS) receptor, a multi-protein complex containing at least CD14, LY96 and TLR4. Binding to bacterial LPS leads to homodimerization. Interacts with LY96 via the extracellular domain. Interacts with MYD88 and TIRAP via their respective TIR domains. Interacts with TICAM2. Interacts with NOX4. Interacts with CNPY3 and HSP90B1; this interaction is required for proper folding in the endoplasmic reticulum. Interacts with MAP3K21; this interaction leads to negative regulation of TLR4 signaling. Interacts with CD36, following CD36 stimulation by oxLDL or amyloid-beta 42, and forms a heterodimer with TLR6. The trimeric complex is internalized and triggers inflammatory response. LYN kinase activity facilitates TLR4-TLR6 heterodimerization and signal initiation. Interacts with TICAM1 in response to LPS in a WDFY1-dependent manner. Interacts with WDFY1 in response to LPS. Interacts with SMPDL3B. Interacts with CEACAM1; upon lipopolysaccharide stimulation, forms a complex including TLR4 and the phosphorylated form of SYK and CEACAM1, which in turn, recruits PTPN6 that dephosphorylates SYK, reducing the production of reactive oxygen species (ROS) and lysosome disruption, which in turn, reduces the activity of the inflammasome. Interacts with RFTN1; the interaction occurs in response to lipopolysaccharide stimulation. Interacts with SCIMP; the interaction occurs in response to lipopolysaccharide stimulation and is enhanced by phosphorylation of SCIMP by LYN. This interaction facilitates the phosphorylation of TLR4 by LYN which elicits a selective cytokine response in macrophages. Interacts with TRAF3IP3. Interacts with TREM1; this interaction enhances TLR4-mediated inflammatory response. Interacts with ZG16B/PAUF. Interacts with CD82; this interaction inhibits TLR4-mediated signaling pathway. Post-translationally, phosphorylated on tyrosine residues by LYN after binding lipopolysaccharide. Ubiquitinated by RNF128 via 'Lys-28'-linked polyubiquitin chains, leading to proteasomal degradation.

It is found in the cell membrane. It localises to the early endosome. The protein localises to the cell projection. The protein resides in the ruffle. In terms of biological role, transmembrane receptor that functions as a pattern recognition receptor recognizing pathogen- and damage-associated molecular patterns (PAMPs and DAMPs) to induce innate immune responses via downstream signaling pathways. At the plasma membrane, cooperates with LY96 to mediate the innate immune response to bacterial lipopolysaccharide (LPS). Also involved in LPS-independent inflammatory responses triggered by free fatty acids, such as palmitate, and Ni(2+). Mechanistically, acts via MYD88, TIRAP and TRAF6, leading to NF-kappa-B activation, cytokine secretion and the inflammatory response. Alternatively, CD14-mediated TLR4 internalization via endocytosis is associated with the initiation of a MYD88-independent signaling via the TICAM1-TBK1-IRF3 axis leading to type I interferon production. In addition to the secretion of proinflammatory cytokines, initiates the activation of NLRP3 inflammasome and formation of a positive feedback loop between autophagy and NF-kappa-B signaling cascade. In complex with TLR6, promotes inflammation in monocytes/macrophages by associating with TLR6 and the receptor CD86. Upon ligand binding, such as oxLDL or amyloid-beta 42, the TLR4:TLR6 complex is internalized and triggers inflammatory response, leading to NF-kappa-B-dependent production of CXCL1, CXCL2 and CCL9 cytokines, via MYD88 signaling pathway, and CCL5 cytokine, via TICAM1 signaling pathway. In myeloid dendritic cells, vesicular stomatitis virus glycoprotein G but not LPS promotes the activation of IRF7, leading to type I IFN production in a CD14-dependent manner. This is Toll-like receptor 4 (TLR4) from Gorilla gorilla gorilla (Western lowland gorilla).